A 445-amino-acid polypeptide reads, in one-letter code: Trigger factor (445 aa).

The PPIase FKBP-type domain maps to 166-251 (GDVVVVDFVG…AKALKRPVDV (86 aa)).

It belongs to the FKBP-type PPIase family. Tig subfamily.

Its subcellular location is the cytoplasm. The enzyme catalyses [protein]-peptidylproline (omega=180) = [protein]-peptidylproline (omega=0). Involved in protein export. Acts as a chaperone by maintaining the newly synthesized protein in an open conformation. Functions as a peptidyl-prolyl cis-trans isomerase. This Gluconacetobacter diazotrophicus (strain ATCC 49037 / DSM 5601 / CCUG 37298 / CIP 103539 / LMG 7603 / PAl5) protein is Trigger factor.